The chain runs to 432 residues: Histidine--tRNA ligase (432 aa).

This sequence belongs to the class-II aminoacyl-tRNA synthetase family.

The protein localises to the cytoplasm. The enzyme catalyses tRNA(His) + L-histidine + ATP = L-histidyl-tRNA(His) + AMP + diphosphate + H(+). In Halobacterium salinarum (strain ATCC 29341 / DSM 671 / R1), this protein is Histidine--tRNA ligase.